We begin with the raw amino-acid sequence, 298 residues long: Acetylglutamate kinase (298 aa).

Substrate-binding positions include 69–70 (GG), Arg91, and Asn191.

The protein belongs to the acetylglutamate kinase family. ArgB subfamily.

The protein resides in the cytoplasm. It carries out the reaction N-acetyl-L-glutamate + ATP = N-acetyl-L-glutamyl 5-phosphate + ADP. The protein operates within amino-acid biosynthesis; L-arginine biosynthesis; N(2)-acetyl-L-ornithine from L-glutamate: step 2/4. Catalyzes the ATP-dependent phosphorylation of N-acetyl-L-glutamate. The sequence is that of Acetylglutamate kinase from Neisseria meningitidis serogroup C / serotype 2a (strain ATCC 700532 / DSM 15464 / FAM18).